The following is a 358-amino-acid chain: 1-deoxy-D-xylulose 5-phosphate reductoisomerase (358 aa).

Residues threonine 7, glycine 8, serine 9, isoleucine 10, glycine 31, asparagine 33, and asparagine 114 each contribute to the NADPH site. Position 115 (lysine 115) interacts with 1-deoxy-D-xylulose 5-phosphate. Glutamate 116 is an NADPH binding site. Aspartate 134 contacts Mn(2+). Residues serine 135, glutamate 136, serine 157, and histidine 180 each contribute to the 1-deoxy-D-xylulose 5-phosphate site. Residue glutamate 136 coordinates Mn(2+). An NADPH-binding site is contributed by glycine 186. Positions 193, 198, 199, and 202 each coordinate 1-deoxy-D-xylulose 5-phosphate. Position 202 (glutamate 202) interacts with Mn(2+).

It belongs to the DXR family. Mg(2+) is required as a cofactor. Requires Mn(2+) as cofactor.

The catalysed reaction is 2-C-methyl-D-erythritol 4-phosphate + NADP(+) = 1-deoxy-D-xylulose 5-phosphate + NADPH + H(+). It functions in the pathway isoprenoid biosynthesis; isopentenyl diphosphate biosynthesis via DXP pathway; isopentenyl diphosphate from 1-deoxy-D-xylulose 5-phosphate: step 1/6. Functionally, catalyzes the NADPH-dependent rearrangement and reduction of 1-deoxy-D-xylulose-5-phosphate (DXP) to 2-C-methyl-D-erythritol 4-phosphate (MEP). This chain is 1-deoxy-D-xylulose 5-phosphate reductoisomerase, found in Wolinella succinogenes (strain ATCC 29543 / DSM 1740 / CCUG 13145 / JCM 31913 / LMG 7466 / NCTC 11488 / FDC 602W) (Vibrio succinogenes).